Here is a 391-residue protein sequence, read N- to C-terminus: uncharacterized protein (391 aa).

WD repeat units lie at residues 137–179 (VNDI…PILA) and 182–222 (PLSS…SAEE).

The protein resides in the cytoplasm. It is found in the nucleus. This is an uncharacterized protein from Schizosaccharomyces pombe (strain 972 / ATCC 24843) (Fission yeast).